The sequence spans 163 residues: Cytochrome c-type biogenesis protein CcmE (163 aa).

Residues 1-8 (MNPRRKKR) are Cytoplasmic-facing. A helical; Signal-anchor for type II membrane protein membrane pass occupies residues 9–29 (LTIILAISAGLAAVIGLVLYA). Residues 30-163 (LSQNIDLFYT…TEAQLKGSKQ (134 aa)) lie on the Periplasmic side of the membrane. Positions 131 and 135 each coordinate heme.

This sequence belongs to the CcmE/CycJ family.

It is found in the cell inner membrane. Its function is as follows. Heme chaperone required for the biogenesis of c-type cytochromes. Transiently binds heme delivered by CcmC and transfers the heme to apo-cytochromes in a process facilitated by CcmF and CcmH. The protein is Cytochrome c-type biogenesis protein CcmE of Aeromonas hydrophila subsp. hydrophila (strain ATCC 7966 / DSM 30187 / BCRC 13018 / CCUG 14551 / JCM 1027 / KCTC 2358 / NCIMB 9240 / NCTC 8049).